Here is a 210-residue protein sequence, read N- to C-terminus: Peroxiredoxin-5, mitochondrial (210 aa).

Residues 1-48 (MLQLGLRVLGCKASSVLRASTCLAGRAGRKEAGWECGGARSFSSSAVT) constitute a mitochondrion transit peptide. Positions 52-210 (IKVGDAIPSV…SLAPNILSQL (159 aa)) constitute a Thioredoxin domain. Position 70 is an N6-acetyllysine; alternate (Lys-70). An N6-succinyllysine; alternate modification is found at Lys-70. Lys-71 bears the N6-acetyllysine mark. Lys-79 is modified (N6-acetyllysine; alternate). Lys-79 is modified (N6-succinyllysine; alternate). Catalysis depends on Cys-96, which acts as the Cysteine sulfenic acid (-SOH) intermediate. Residue Cys-96 is the site of S-palmitoyl cysteine attachment. A disulfide bridge connects residues Cys-96 and Cys-200. Lys-112 is modified (N6-succinyllysine). Residues Ser-167 and Ser-178 each carry the phosphoserine modification. A Microbody targeting signal motif is present at residues 208 to 210 (SQL).

Belongs to the peroxiredoxin family. Prx5 subfamily. Monomer. In terms of processing, S-palmitoylated. Palmitoylation occurs on the active site, inhibiting its reactivity; therefore PRDX5 palmitoylation status determines its antioxidant capacity. Post-translationally, S-palmitoylated. Depalmitoylated by ABHD10. In terms of tissue distribution, widely expressed.

The protein localises to the mitochondrion. It is found in the cytoplasm. It localises to the peroxisome matrix. The catalysed reaction is a hydroperoxide + [thioredoxin]-dithiol = an alcohol + [thioredoxin]-disulfide + H2O. Its function is as follows. Thiol-specific peroxidase that catalyzes the reduction of hydrogen peroxide and organic hydroperoxides to water and alcohols, respectively. Plays a role in cell protection against oxidative stress by detoxifying peroxides and as sensor of hydrogen peroxide-mediated signaling events. This Mus musculus (Mouse) protein is Peroxiredoxin-5, mitochondrial.